A 2243-amino-acid chain; its full sequence is Zinc finger FYVE domain-containing protein 26 homolog (2243 aa).

2 disordered regions span residues 386–416 (SQRKGEDGENDEEDDEQYVDDDVASPPRPTA) and 514–556 (KKKA…GKAS). The span at 393–408 (GENDEEDDEQYVDDDV) shows a compositional bias: acidic residues. Position 403 is a phosphotyrosine (tyrosine 403). A compositionally biased stretch (basic and acidic residues) spans 517-528 (ASSDDESRERSN). Residues 534-543 (NRRKARRQRR) are compositionally biased toward basic residues. An LRR 1 repeat occupies 617–644 (KKIIETFHLEHSQLNRELHFMEQQQLVK). Serine 1424 is modified (phosphoserine). Residues 1444–1500 (DEEASHCMCCRRAAFTMLMRRHHCRRCGRVVCYACSTHRIRIPELYDELEVRICNDC) form an FYVE-type zinc finger. Residues cysteine 1450, cysteine 1453, cysteine 1467, cysteine 1470, cysteine 1475, cysteine 1478, cysteine 1497, and cysteine 1500 each coordinate Zn(2+). The interval 1505–1534 (TPAKDQGDGTSSERSAISGQVSKSSGRSDS) is disordered. The segment covering 1512–1534 (DGTSSERSAISGQVSKSSGRSDS) has biased composition (polar residues). An LRR 2 repeat occupies 1887–1912 (YPQLANGGLNVLMDELQQLDDAQFTA).

This sequence belongs to the ZFYVE26 family.

Its function is as follows. Phosphatidylinositol 3-phosphate (PtdIns[3]P)-binding protein. Involved in autophagy. The polypeptide is Zinc finger FYVE domain-containing protein 26 homolog (Drosophila melanogaster (Fruit fly)).